Here is a 400-residue protein sequence, read N- to C-terminus: Mannitol-1-phosphate 5-dehydrogenase (400 aa).

12–23 (AVHFGAGNIGRG) serves as a coordination point for NAD(+). Lys221 is an active-site residue.

It belongs to the mannitol dehydrogenase family. As to quaternary structure, monomer.

It carries out the reaction D-mannitol 1-phosphate + NAD(+) = beta-D-fructose 6-phosphate + NADH + H(+). In terms of biological role, catalyzes the NAD(H)-dependent interconversion of D-fructose 6-phosphate and D-mannitol 1-phosphate in the mannitol metabolic pathway. The sequence is that of Mannitol-1-phosphate 5-dehydrogenase from Pyricularia oryzae (strain Y34) (Rice blast fungus).